The following is a 470-amino-acid chain: Putative multidrug resistance protein MdtD (470 aa).

Residues 1 to 11 lie on the Periplasmic side of the membrane; the sequence is MTELPDNTRWQ. A helical transmembrane segment spans residues 12–32; sequence LWIVAFGFFMQSLDTTIVNTA. The Cytoplasmic portion of the chain corresponds to 33–48; sequence LPSMAKSLGESPLHMH. A helical transmembrane segment spans residues 49–69; the sequence is MVVVSYVLTVAVMLPASGWLA. Over 70–76 the chain is Periplasmic; sequence DKIGVRN. Residues 77–97 form a helical membrane-spanning segment; it reads IFFAAIVLFTLGSLFCALSGT. The Cytoplasmic portion of the chain corresponds to 98-101; that stretch reads LNQL. A helical transmembrane segment spans residues 102–124; it reads VLARVLQGVGGAMMVPVGRLTVM. The Periplasmic portion of the chain corresponds to 125–137; sequence KIVPRAQYMAAMT. Residues 138-158 traverse the membrane as a helical segment; that stretch reads FVTLPGQIGPLLGPALGGVLV. Over 159-164 the chain is Cytoplasmic; sequence EYASWH. Residues 165 to 185 form a helical membrane-spanning segment; that stretch reads WIFLINIPVGIVGAMATFMLM. Topologically, residues 186–196 are periplasmic; it reads PNYTIETRRFD. A helical membrane pass occupies residues 197 to 217; the sequence is LPGFLLLAIGMAVLTLALDGS. The Cytoplasmic portion of the chain corresponds to 218 to 224; that stretch reads KSMGISP. Residues 225-245 traverse the membrane as a helical segment; sequence WTLAGLAAGGAAAILLYLFHA. The Periplasmic portion of the chain corresponds to 246–262; the sequence is KKSSGALFSLRLFRTPT. The helical transmembrane segment at 263-283 threads the bilayer; it reads FSLGLLGSFAGRIGSGMLPFM. Over 284–285 the chain is Cytoplasmic; the sequence is TP. The helical transmembrane segment at 286 to 306 threads the bilayer; sequence VFLQIGLGFSPFHAGLMMIPM. Residues 307–341 are Periplasmic-facing; the sequence is VLGSMGMKRIVVQIVNRFGYRRVLVATTLGLALVS. A helical membrane pass occupies residues 342-362; sequence LLFMSVALLGWYYLLPLVLLL. Topologically, residues 363 to 395 are cytoplasmic; the sequence is QGMVNSARFSSMNTLTLKDLPDTLASSGNSLLS. The chain crosses the membrane as a helical span at residues 396-416; that stretch reads MIMQLSMSIGVTIAGMLLGMF. Over 417-430 the chain is Periplasmic; that stretch reads GQQHIGIDSSATHH. Residues 431–451 form a helical membrane-spanning segment; it reads VFMYTWLCMAVIIALPAIIFA. Residues 452–470 are Cytoplasmic-facing; sequence RVPNDTQQNMVISRRKRSL.

The protein belongs to the major facilitator superfamily. TCR/Tet family.

It localises to the cell inner membrane. The chain is Putative multidrug resistance protein MdtD from Salmonella paratyphi A (strain ATCC 9150 / SARB42).